The chain runs to 378 residues: Erythronate-4-phosphate dehydrogenase (378 aa).

Residues Ser-45 and Thr-66 each contribute to the substrate site. 2 residues coordinate NAD(+): Asp-146 and Thr-175. Residue Arg-208 is part of the active site. Asp-232 serves as a coordination point for NAD(+). Residue Glu-237 is part of the active site. His-254 functions as the Proton donor in the catalytic mechanism. Gly-257 is an NAD(+) binding site. Residue Tyr-258 coordinates substrate.

This sequence belongs to the D-isomer specific 2-hydroxyacid dehydrogenase family. PdxB subfamily. In terms of assembly, homodimer.

The protein resides in the cytoplasm. It catalyses the reaction 4-phospho-D-erythronate + NAD(+) = (R)-3-hydroxy-2-oxo-4-phosphooxybutanoate + NADH + H(+). It participates in cofactor biosynthesis; pyridoxine 5'-phosphate biosynthesis; pyridoxine 5'-phosphate from D-erythrose 4-phosphate: step 2/5. Its function is as follows. Catalyzes the oxidation of erythronate-4-phosphate to 3-hydroxy-2-oxo-4-phosphonooxybutanoate. The protein is Erythronate-4-phosphate dehydrogenase of Salmonella agona (strain SL483).